Reading from the N-terminus, the 224-residue chain is Response regulator protein GraR (224 aa).

In terms of domain architecture, Response regulatory spans 2-115 (QILLVEDDNT…VLIAKLQAIY (114 aa)). At Asp-51 the chain carries 4-aspartylphosphate. A DNA-binding region (ompR/PhoB-type) is located at residues 126–224 (KRTLTWQDAI…KVGKGYMAHE (99 aa)). Thr-128, Thr-130, and Thr-149 each carry phosphothreonine.

Interacts with GraX. In terms of processing, phosphorylated by GraS. Phosphorylated by Stk1; phosphorylation increases the DNA-binding activity of GraR.

Its subcellular location is the cytoplasm. Functionally, member of the two-component regulatory system GraR/GraS involved in resistance against cationic antimicrobial peptides (CAMPs). Upon phosphorylation by GraS, functions as a transcription regulator by direct binding to promoter regions of target genes such as adhesins, exoproteins, transporters, toxins, and proteins involved in cell wall synthesis. Down-regulates the expression of many genes involved in RNA and amino acid synthesis or glycolysis. This chain is Response regulator protein GraR (graR), found in Staphylococcus aureus (strain bovine RF122 / ET3-1).